A 71-amino-acid polypeptide reads, in one-letter code: MCGSYYGNYYGTPGYGFCGYGGLGYGYGGLGCGYGSCCGCGFRRLGCGYGYGSRSLCGYGYGCGSGSGYYY.

This sequence belongs to the KRTAP type 6 family. Interacts with hair keratins.

Its function is as follows. In the hair cortex, hair keratin intermediate filaments are embedded in an interfilamentous matrix, consisting of hair keratin-associated proteins (KRTAP), which are essential for the formation of a rigid and resistant hair shaft through their extensive disulfide bond cross-linking with abundant cysteine residues of hair keratins. The matrix proteins include the high-sulfur and high-glycine-tyrosine keratins. The sequence is that of Keratin-associated protein 6-1 (KRTAP6-1) from Homo sapiens (Human).